The chain runs to 105 residues: Large ribosomal subunit protein uL24 (105 aa).

The protein belongs to the universal ribosomal protein uL24 family. In terms of assembly, part of the 50S ribosomal subunit.

In terms of biological role, one of two assembly initiator proteins, it binds directly to the 5'-end of the 23S rRNA, where it nucleates assembly of the 50S subunit. One of the proteins that surrounds the polypeptide exit tunnel on the outside of the subunit. The chain is Large ribosomal subunit protein uL24 from Marinomonas sp. (strain MWYL1).